The sequence spans 462 residues: Cytochrome c biogenesis protein CcsB (462 aa).

3 helical membrane-spanning segments follow: residues 30–50 (LRVA…GTVI), 89–109 (TWWY…CTFR), and 175–195 (IGPI…IWGA).

Belongs to the Ccs1/CcsB family. In terms of assembly, may interact with CcsA.

The protein localises to the cellular thylakoid membrane. Functionally, required during biogenesis of c-type cytochromes (cytochrome c6 and cytochrome f) at the step of heme attachment. In Picosynechococcus sp. (strain ATCC 27264 / PCC 7002 / PR-6) (Agmenellum quadruplicatum), this protein is Cytochrome c biogenesis protein CcsB.